We begin with the raw amino-acid sequence, 179 residues long: uncharacterized protein (179 aa).

Helical transmembrane passes span 33-53 (HIIA…VILD), 63-83 (VMFI…MLVL), 89-109 (ITAS…FVLT), and 115-135 (FSPF…EYFF).

It is found in the cell membrane. This is an uncharacterized protein from Bacillus subtilis (strain 168).